A 404-amino-acid chain; its full sequence is Aspartokinase 1 (404 aa).

7 to 10 is a binding site for ATP; sequence KFGG. 25 to 30 lines the substrate pocket; it reads HIKEAI. Serine 41 contacts ATP. Residues 52 to 54, glutamate 79, 130 to 131, 155 to 158, and serine 158 contribute to the substrate site; these read TDS, LA, and RGGS. Residues 178-179 and 184-189 each bind ATP; these read TD and MTADPR. Substrate contacts are provided by residues 299 to 301, 355 to 356, 369 to 370, and 376 to 377; these read SVD, VT, PI, and SH. One can recognise an ACT domain in the interval 344–404; the sequence is AVGAGIMGVP…ALHEVFELSK (61 aa).

The protein belongs to the aspartokinase family. In terms of assembly, tetramer consisting of 2 isoforms Alpha (catalytic) and 2 isoforms Beta (function not known).

It catalyses the reaction L-aspartate + ATP = 4-phospho-L-aspartate + ADP. Its pathway is amino-acid biosynthesis; L-lysine biosynthesis via DAP pathway; (S)-tetrahydrodipicolinate from L-aspartate: step 1/4. It participates in amino-acid biosynthesis; L-methionine biosynthesis via de novo pathway; L-homoserine from L-aspartate: step 1/3. The protein operates within amino-acid biosynthesis; L-threonine biosynthesis; L-threonine from L-aspartate: step 1/5. Its activity is regulated as follows. Diaminopimelate-sensitive. Its function is as follows. Catalyzes the phosphorylation of the beta-carboxyl group of aspartic acid with ATP to yield 4-phospho-L-aspartate, which is involved in the branched biosynthetic pathway leading to the biosynthesis of amino acids threonine, isoleucine and methionine. The chain is Aspartokinase 1 (dapG) from Bacillus subtilis (strain 168).